The sequence spans 164 residues: Phosphopantetheine adenylyltransferase (164 aa).

T9 lines the substrate pocket. Residues 9 to 10 (TF) and H17 contribute to the ATP site. Residues K41, T76, and R90 each coordinate substrate. ATP is bound by residues 91 to 93 (GLR), E101, and 126 to 132 (YQFVSSS).

The protein belongs to the bacterial CoaD family. As to quaternary structure, homohexamer. Mg(2+) is required as a cofactor.

It is found in the cytoplasm. The catalysed reaction is (R)-4'-phosphopantetheine + ATP + H(+) = 3'-dephospho-CoA + diphosphate. Its pathway is cofactor biosynthesis; coenzyme A biosynthesis; CoA from (R)-pantothenate: step 4/5. In terms of biological role, reversibly transfers an adenylyl group from ATP to 4'-phosphopantetheine, yielding dephospho-CoA (dPCoA) and pyrophosphate. The protein is Phosphopantetheine adenylyltransferase of Coprothermobacter proteolyticus (strain ATCC 35245 / DSM 5265 / OCM 4 / BT).